Consider the following 274-residue polypeptide: Thiamine kinase (274 aa).

The protein belongs to the thiamine kinase family.

The catalysed reaction is thiamine + ATP = thiamine phosphate + ADP + H(+). The protein operates within cofactor biosynthesis; thiamine diphosphate biosynthesis; thiamine phosphate from thiamine: step 1/1. Functionally, catalyzes the ATP-dependent phosphorylation of thiamine to thiamine phosphate. Is involved in thiamine salvage. This is Thiamine kinase from Salmonella typhimurium (strain LT2 / SGSC1412 / ATCC 700720).